We begin with the raw amino-acid sequence, 298 residues long: MNELIEKAKVLQEALPYIREFHGKVFVIKYGGSAMHDEELRESFARDVVLLKYVGINPVIVHGGGPQISKTLEKFGIKPKFVGGMRKTDEETMHVVEMVLSGDINKDIVALINRYSGEKIYAVGLSGRDGRLLKAKKLDKERYFSELGLPVPEEDIGFVGEIVDVNEELIFTLLSHNFIPVIAPVGVGEEGEAYNVNADLAASEIAGEIKAEKLIYLTDTKGVLDEKGELISSLSKDKAEELIKKGVIREGMIPKVRSALRALEKGVKKVHIIDGRVKHSILLEVFTKEGVGTEITLE.

Residues 64–65 (GG), Arg86, and Asn195 each bind substrate.

The protein belongs to the acetylglutamate kinase family. ArgB subfamily.

Its subcellular location is the cytoplasm. The enzyme catalyses N-acetyl-L-glutamate + ATP = N-acetyl-L-glutamyl 5-phosphate + ADP. The protein operates within amino-acid biosynthesis; L-arginine biosynthesis; N(2)-acetyl-L-ornithine from L-glutamate: step 2/4. Its function is as follows. Catalyzes the ATP-dependent phosphorylation of N-acetyl-L-glutamate. The sequence is that of Acetylglutamate kinase from Aquifex aeolicus (strain VF5).